The sequence spans 273 residues: Imidazole glycerol phosphate synthase subunit HisF (273 aa).

Catalysis depends on residues D11 and D134.

This sequence belongs to the HisA/HisF family. In terms of assembly, heterodimer of HisH and HisF.

Its subcellular location is the cytoplasm. The catalysed reaction is 5-[(5-phospho-1-deoxy-D-ribulos-1-ylimino)methylamino]-1-(5-phospho-beta-D-ribosyl)imidazole-4-carboxamide + L-glutamine = D-erythro-1-(imidazol-4-yl)glycerol 3-phosphate + 5-amino-1-(5-phospho-beta-D-ribosyl)imidazole-4-carboxamide + L-glutamate + H(+). It functions in the pathway amino-acid biosynthesis; L-histidine biosynthesis; L-histidine from 5-phospho-alpha-D-ribose 1-diphosphate: step 5/9. Functionally, IGPS catalyzes the conversion of PRFAR and glutamine to IGP, AICAR and glutamate. The HisF subunit catalyzes the cyclization activity that produces IGP and AICAR from PRFAR using the ammonia provided by the HisH subunit. This is Imidazole glycerol phosphate synthase subunit HisF from Methanocella arvoryzae (strain DSM 22066 / NBRC 105507 / MRE50).